A 387-amino-acid polypeptide reads, in one-letter code: Ferrochelatase (387 aa).

Residues H196 and E277 each contribute to the Fe cation site.

The protein belongs to the ferrochelatase family.

It is found in the cytoplasm. It carries out the reaction heme b + 2 H(+) = protoporphyrin IX + Fe(2+). It functions in the pathway porphyrin-containing compound metabolism; protoheme biosynthesis; protoheme from protoporphyrin-IX: step 1/1. Its function is as follows. Catalyzes the ferrous insertion into protoporphyrin IX. In Cyanothece sp. (strain PCC 7425 / ATCC 29141), this protein is Ferrochelatase.